The chain runs to 328 residues: Ubiquitin carboxyl-terminal hydrolase isozyme L5 (328 aa).

Residues 7 to 225 (EWCLMESDPG…IRFNLMAIVS (219 aa)) form the UCH catalytic domain. Position 47 is an N6-succinyllysine (lysine 47). The active-site Nucleophile is cysteine 88. Position 158 is an N6-acetyllysine (lysine 158). The Proton donor role is filled by histidine 164. Lysine 288 is subject to N6-succinyllysine. One can recognise a ULD domain in the interval 290–318 (NYLPFIMELLKTLAEHQQLIPLVEKAKEK). Residues 312–328 (VEKAKEKQNAKKAQETK) are interaction with ADRM1.

This sequence belongs to the peptidase C12 family. As to quaternary structure, component of the 19S (PA700) regulatory complex of the 26S proteasome. Interacts with ADRM1 and NFRKB. Component of the INO80 complex; specifically part of a complex module associated with N-terminus of INO80.

It is found in the cytoplasm. The protein resides in the nucleus. It carries out the reaction Thiol-dependent hydrolysis of ester, thioester, amide, peptide and isopeptide bonds formed by the C-terminal Gly of ubiquitin (a 76-residue protein attached to proteins as an intracellular targeting signal).. With respect to regulation, activated by ADRM1. Inhibited by interaction with NFRKB. Functionally, protease that specifically cleaves 'Lys-48'-linked polyubiquitin chains. Deubiquitinating enzyme associated with the 19S regulatory subunit of the 26S proteasome. Putative regulatory component of the INO80 complex; however is inactive in the INO80 complex and is activated by a transient interaction of the INO80 complex with the proteasome via ADRM1. In Bos taurus (Bovine), this protein is Ubiquitin carboxyl-terminal hydrolase isozyme L5 (UCHL5).